Consider the following 553-residue polypeptide: Solute carrier family 45 member 3 (553 aa).

11 helical membrane-spanning segments follow: residues 19–39 (LLVNLLTFGLEVCLAAGITYV), 52–72 (FMTMVLGIGPVLGLVCVPLLG), 88–108 (FIWALSLGILLSLFLIPRAGW), 120–140 (LELALLILGVGLLDFCGQVCF), 161–181 (YSVYAFMISLGGCLGYLLPAI), 198–218 (CLFGLLTLIFLTCVAATLLVA), 275–295 (FVAELCSWMALMTFTLFYTDF), 323–343 (MGSLGLFLQCAISLVFSLVMD), 353–373 (AVYLASVAAFPVAAGATCLSH), 382–402 (AALTGFTFSALQILPYTLASL), and 522–542 (AYMVSAAGLGLVAIYFATQVV).

Belongs to the glycoside-pentoside-hexuronide (GPH) cation symporter transporter (TC 2.A.2) family. As to expression, prostate specific. Expressed in all prostatic glandular cells. Expressed both in normal and cancerous prostates.

Its subcellular location is the membrane. It catalyses the reaction sucrose(out) + H(+)(out) = sucrose(in) + H(+)(in). Its function is as follows. Proton-associated sucrose transporter. May be able to transport also glucose and fructose. The protein is Solute carrier family 45 member 3 of Homo sapiens (Human).